A 371-amino-acid chain; its full sequence is MKINYQELANNIKLWAKELGFQKVGICDVDLSQHEAALEQWLEAGYHGSMDWMARHGVMRARPDELHPGTIRVISARMDYLPPKAGFASNLKDPNQAYISRYALGRDYHKLIRNQLKKLGQKIEEEVEQLGYRPFVDSAPILERPLAEKAGLGWTGKHSLLLDKNAGSWFFLGELLVDIPLPVDTPVENQCGKCTACISSCPTNAILENGVIDARRCISYLTIENSGIIPEEFRSLMGNRIYGCDDCQLVCPWNREAEITQQADFHRRSSLGNSDLISLFSWDESTFLKNMEGSAIRRIGHIQWLRNLSIAMGNAPHSEAIISALQDRLGLDENLDIHIQWAIKQQSLVITSNRKEQRLIRIIEKGLPRDA.

The active-site Proton donor is the aspartate 137. The 33-residue stretch at 179–211 folds into the 4Fe-4S ferredoxin-type domain; the sequence is IPLPVDTPVENQCGKCTACISSCPTNAILENGV. [4Fe-4S] cluster is bound by residues cysteine 191, cysteine 194, cysteine 197, cysteine 201, cysteine 217, cysteine 244, cysteine 247, and cysteine 251.

It belongs to the QueG family. Monomer. Cob(II)alamin serves as cofactor. Requires [4Fe-4S] cluster as cofactor.

It is found in the cytoplasm. It catalyses the reaction epoxyqueuosine(34) in tRNA + AH2 = queuosine(34) in tRNA + A + H2O. It functions in the pathway tRNA modification; tRNA-queuosine biosynthesis. In terms of biological role, catalyzes the conversion of epoxyqueuosine (oQ) to queuosine (Q), which is a hypermodified base found in the wobble positions of tRNA(Asp), tRNA(Asn), tRNA(His) and tRNA(Tyr). The protein is Epoxyqueuosine reductase of Aliivibrio fischeri (strain ATCC 700601 / ES114) (Vibrio fischeri).